Here is a 361-residue protein sequence, read N- to C-terminus: Phosphoserine aminotransferase (361 aa).

Arg43 lines the L-glutamate pocket. Residues 77–78 (AS), Trp103, Thr153, Asp173, and Gln196 each bind pyridoxal 5'-phosphate. Position 197 is an N6-(pyridoxal phosphate)lysine (Lys197). A pyridoxal 5'-phosphate-binding site is contributed by 238 to 239 (NT).

This sequence belongs to the class-V pyridoxal-phosphate-dependent aminotransferase family. SerC subfamily. As to quaternary structure, homodimer. Requires pyridoxal 5'-phosphate as cofactor.

It is found in the cytoplasm. It carries out the reaction O-phospho-L-serine + 2-oxoglutarate = 3-phosphooxypyruvate + L-glutamate. The catalysed reaction is 4-(phosphooxy)-L-threonine + 2-oxoglutarate = (R)-3-hydroxy-2-oxo-4-phosphooxybutanoate + L-glutamate. The protein operates within amino-acid biosynthesis; L-serine biosynthesis; L-serine from 3-phospho-D-glycerate: step 2/3. Its pathway is cofactor biosynthesis; pyridoxine 5'-phosphate biosynthesis; pyridoxine 5'-phosphate from D-erythrose 4-phosphate: step 3/5. Catalyzes the reversible conversion of 3-phosphohydroxypyruvate to phosphoserine and of 3-hydroxy-2-oxo-4-phosphonooxybutanoate to phosphohydroxythreonine. The sequence is that of Phosphoserine aminotransferase from Stutzerimonas stutzeri (Pseudomonas stutzeri).